Here is a 325-residue protein sequence, read N- to C-terminus: CRISPR-associated endonuclease Cas1 2 (325 aa).

The Mn(2+) site is built by glutamate 145, histidine 212, and aspartate 225. The disordered stretch occupies residues 283 to 325; sequence EEEDPVEEDPTRPGGLWDLEGEVEGGVAYGGDDPGEGAEEPEG. The segment covering 315–325 has biased composition (acidic residues); that stretch reads DPGEGAEEPEG.

This sequence belongs to the CRISPR-associated endonuclease Cas1 family. Homodimer, forms a heterotetramer with a Cas2 homodimer. It depends on Mg(2+) as a cofactor. The cofactor is Mn(2+).

Its function is as follows. CRISPR (clustered regularly interspaced short palindromic repeat), is an adaptive immune system that provides protection against mobile genetic elements (viruses, transposable elements and conjugative plasmids). CRISPR clusters contain spacers, sequences complementary to antecedent mobile elements, and target invading nucleic acids. CRISPR clusters are transcribed and processed into CRISPR RNA (crRNA). Acts as a dsDNA endonuclease. Involved in the integration of spacer DNA into the CRISPR cassette. The chain is CRISPR-associated endonuclease Cas1 2 from Thermus thermophilus (strain ATCC 27634 / DSM 579 / HB8).